Here is a 622-residue protein sequence, read N- to C-terminus: Cytochrome c oxidase subunit 1 (622 aa).

Residues 1–27 (MLNALTEKRTRGSMLWDYLTTVDHKKI) lie on the Extracellular side of the membrane. Residues 28–46 (AILYLVAGGFFFLVGGIEA) form a helical membrane-spanning segment. The Cytoplasmic portion of the chain corresponds to 47-68 (MFIRIQLAKPENAFLSAQAYNE). A helical membrane pass occupies residues 69 to 88 (VMTMHGTTMIFLAAMPLLFA). Histidine 73 lines the Fe(II)-heme a pocket. The Extracellular portion of the chain corresponds to 89 to 110 (LMNAVVPLQIGARDVSFPFLNA). A helical transmembrane segment spans residues 111–128 (LGFWLFFFGGIFLNLSWF). At 129 to 159 (LGGAPDAGWTSYASLSLHSKGHGIDFFVLGL) the chain is on the cytoplasmic side. The helical transmembrane segment at 160 to 178 (QISGLGTLIAGINFLATII) threads the bilayer. The Extracellular portion of the chain corresponds to 179–196 (NMRAPGMTYMRLPLFTWT). A helical membrane pass occupies residues 197-215 (TFVASALILFAFPPLTVGL). Topologically, residues 216–241 (ALMMLDRLFGTNFFNPELGGNTVIWE) are cytoplasmic. A helical transmembrane segment spans residues 242–261 (HLFWIFGHPEVYILILPAFG). Positions 249 and 253 each coordinate Cu cation. The segment at residues 249-253 (HPEVY) is a cross-link (1'-histidyl-3'-tyrosine (His-Tyr)). Over 262 to 284 (IFSEVIPVFARKRLFGYSSMVFA) the chain is Extracellular. Residues 285 to 304 (IVLIGFLGFMVWVHHMFTTG) form a helical membrane-spanning segment. The Cu cation site is built by histidine 298 and histidine 299. Residues 305-312 (LGPIANAI) lie on the Cytoplasmic side of the membrane. Residues 313–331 (FAVATMAIAIPTGIKIFNW) form a helical membrane-spanning segment. Over 332–346 (LLTIWGGNVKYTTAM) the chain is Extracellular. Residues 347 to 366 (LYAVSFIPSFVLGGVTGVML) form a helical membrane-spanning segment. Over 367 to 374 (AAAAADYQ) the chain is Cytoplasmic. The chain crosses the membrane as a helical span at residues 375-394 (FHDTYFVVAHFHYVIIGGVV). Histidine 384 provides a ligand contact to heme a3. Residue histidine 386 coordinates Fe(II)-heme a. The Extracellular portion of the chain corresponds to 395-421 (FGLLAGVHFWWPKMFGKILHETMGKIS). A helical transmembrane segment spans residues 422–441 (FVLFFIGFHLTFFIQHFVGL). Residues 442-459 (MGMPRRVYTFLPGQGLET) lie on the Cytoplasmic side of the membrane. Residues 460 to 479 (GNLISTIGAFFMAAAVILLL) form a helical membrane-spanning segment. The Extracellular portion of the chain corresponds to 480–552 (VNVIWTSVKG…EPVDDIHMPN (73 aa)). Residues 553 to 572 (GSILPLIISFGLFVAAFGLL) traverse the membrane as a helical segment. The Cytoplasmic segment spans residues 573–580 (YRSDYAWG). Residues 581–604 (LPVIFIGLGITFITMLLRSVIDDH) traverse the membrane as a helical segment. Topologically, residues 605–622 (GYHIHKEELPNDDKGVKA) are cytoplasmic.

Belongs to the heme-copper respiratory oxidase family. The cofactor is Cu(2+). It depends on heme as a cofactor.

It is found in the cell membrane. The catalysed reaction is 4 Fe(II)-[cytochrome c] + O2 + 8 H(+)(in) = 4 Fe(III)-[cytochrome c] + 2 H2O + 4 H(+)(out). It participates in energy metabolism; oxidative phosphorylation. Cytochrome c oxidase is the component of the respiratory chain that catalyzes the reduction of oxygen to water. Subunits 1-3 form the functional core of the enzyme complex. Co I is the catalytic subunit of the enzyme. Electrons originating in cytochrome c are transferred via the copper A center of subunit 2 and heme a of subunit 1 to the bimetallic center formed by heme a3 and copper B. This cytochrome c oxidase shows proton pump activity across the membrane in addition to the electron transfer. The protein is Cytochrome c oxidase subunit 1 (ctaD) of Bacillus subtilis (strain 168).